The following is a 362-amino-acid chain: 1-aminocyclopropane-1-carboxylate oxidase homolog 10 (362 aa).

Residues 211-310 enclose the Fe2OG dioxygenase domain; the sequence is KGLFMLCHYY…RISVACFFSS (100 aa). Fe cation-binding residues include H235, D237, and H291. R301 contributes to the 2-oxoglutarate binding site.

Belongs to the iron/ascorbate-dependent oxidoreductase family. Fe(2+) serves as cofactor.

The sequence is that of 1-aminocyclopropane-1-carboxylate oxidase homolog 10 from Arabidopsis thaliana (Mouse-ear cress).